Here is a 358-residue protein sequence, read N- to C-terminus: Beta-lactamase (358 aa).

The active-site Acyl-ester intermediate is Ser-60. Residue Tyr-146 is the Proton acceptor of the active site. A substrate-binding site is contributed by 311-313 (KTG).

This sequence belongs to the class-C beta-lactamase family.

It localises to the periplasm. The enzyme catalyses a beta-lactam + H2O = a substituted beta-amino acid. This protein is a serine beta-lactamase with a substrate specificity for cephalosporins. The protein is Beta-lactamase of Pseudomonas fluorescens.